Here is a 482-residue protein sequence, read N- to C-terminus: MKTLNRRDFPGAQYPERIIQFGEGNFLRAFVDWQIDLLNEHTDLNSGVVVVRPIETSFPPSLSTQDGLYTTIIRGLNEKGEAVSDARLIRSVNREISVYSEYDEFLKLAHNPEMRFVFSNTTEAGISYHAGDKFDDAPAISYPAKLTRLLFERFSHFNGALDKGWIIIPCELIDYNGDALRELVLRYAQEWALPEAFIQWLDQANSFCSTLVDRIVTGYPRDEVAKLEEELGYHDGFLDTAEHFYLFVIQGPKSLATELRLDKYPLNVLIVDDIKPYKERKVAILNGAHTALVPVAFQAGLDTVGEAMNDAEICAFVEKAIYEEIIPVLDLPRDELESFASAVTGRFRNPYKHQLLSIALNGMTKFRTRILPQLLAGQKANGTLPARLTFALAALIAFYRGERNGETYPVQDDAHWLERYQQLWSQHRDHVIGTQELVAIVLAEKDHWEQDLTQVPGLVEQVANDLDAILEKGMREAVRPLC.

Ile18 to Ala29 contacts NAD(+).

Belongs to the mannitol dehydrogenase family. UxaB subfamily.

The enzyme catalyses D-altronate + NAD(+) = keto-D-tagaturonate + NADH + H(+). Its pathway is carbohydrate metabolism; pentose and glucuronate interconversion. In Shigella sonnei (strain Ss046), this protein is Altronate oxidoreductase.